The sequence spans 315 residues: L-lactate dehydrogenase (315 aa).

Residues valine 17, aspartate 38, lysine 43, tyrosine 69, and 83 to 84 (GA) contribute to the NAD(+) site. Substrate is bound by residues glutamine 86 and arginine 92. NAD(+) contacts are provided by residues serine 105, 122-124 (ATN), and serine 147. Residue 124–127 (NPVD) participates in substrate binding. 152–155 (DTAR) contributes to the substrate binding site. Residues arginine 157 and histidine 172 each coordinate beta-D-fructose 1,6-bisphosphate. The Proton acceptor role is filled by histidine 179. The residue at position 223 (tyrosine 223) is a Phosphotyrosine. Threonine 232 provides a ligand contact to substrate.

It belongs to the LDH/MDH superfamily. LDH family. As to quaternary structure, homotetramer.

The protein resides in the cytoplasm. The catalysed reaction is (S)-lactate + NAD(+) = pyruvate + NADH + H(+). Its pathway is fermentation; pyruvate fermentation to lactate; (S)-lactate from pyruvate: step 1/1. With respect to regulation, allosterically activated by fructose 1,6-bisphosphate (FBP). In terms of biological role, catalyzes the conversion of lactate to pyruvate. The chain is L-lactate dehydrogenase from Macrococcus caseolyticus (strain JCSC5402) (Macrococcoides caseolyticum).